We begin with the raw amino-acid sequence, 520 residues long: GMP synthase [glutamine-hydrolyzing] (520 aa).

The 194-residue stretch at 9–202 folds into the Glutamine amidotransferase type-1 domain; the sequence is TVLIVDFGSQ…IHNIAGIKGD (194 aa). Residue cysteine 86 is the Nucleophile of the active site. Active-site residues include histidine 176 and glutamate 178. In terms of domain architecture, GMPS ATP-PPase spans 203 to 395; that stretch reads WSMSAYRAKA…LGLPDSFIGR (193 aa). 230–236 is an ATP binding site; sequence SGGVDSS.

Homodimer.

It carries out the reaction XMP + L-glutamine + ATP + H2O = GMP + L-glutamate + AMP + diphosphate + 2 H(+). Its pathway is purine metabolism; GMP biosynthesis; GMP from XMP (L-Gln route): step 1/1. Its function is as follows. Catalyzes the synthesis of GMP from XMP. In Rhizobium rhizogenes (strain K84 / ATCC BAA-868) (Agrobacterium radiobacter), this protein is GMP synthase [glutamine-hydrolyzing].